Consider the following 655-residue polypeptide: tRNA-guanine(15) transglycosylase (655 aa).

Asp-89 (nucleophile) is an active-site residue. Residues Asp-124 and Ala-195 each coordinate substrate. The Zn(2+) site is built by Cys-281, Cys-283, and Cys-286. In terms of domain architecture, PUA spans 577-652 (KYRVVVNKEA…LAVKVRGGLK (76 aa)).

This sequence belongs to the archaeosine tRNA-ribosyltransferase family. Zn(2+) is required as a cofactor.

It catalyses the reaction guanosine(15) in tRNA + 7-cyano-7-deazaguanine = 7-cyano-7-carbaguanosine(15) in tRNA + guanine. The protein operates within tRNA modification; archaeosine-tRNA biosynthesis. Its function is as follows. Exchanges the guanine residue with 7-cyano-7-deazaguanine (preQ0) at position 15 in the dihydrouridine loop (D-loop) of archaeal tRNAs. Can also utilize guanine as substrate. The protein is tRNA-guanine(15) transglycosylase of Methanocaldococcus jannaschii (strain ATCC 43067 / DSM 2661 / JAL-1 / JCM 10045 / NBRC 100440) (Methanococcus jannaschii).